Consider the following 1935-residue polypeptide: Myosin-7 (1935 aa).

The region spanning 32–81 (DLKKDVFVPDDKEEFVKATILSREGGKVTAETEHGKTVTVKEDQVLQQNP) is the Myosin N-terminal SH3-like domain. In terms of domain architecture, Myosin motor spans 85-778 (DKIEDMAMLT…LLGLLEEMRD (694 aa)). Position 129 is an N6,N6,N6-trimethyllysine (Lys129). ATP is bound at residue 178–185 (GESGAGKT). Thr378 bears the Phosphothreonine mark. 2 actin-binding regions span residues 655-677 (LNKL…IPNE) and 757-771 (KFGH…GLLG). The 30-residue stretch at 781–810 (LSRIITRIQAQSRGVLSRMEFKKLLERRDS) folds into the IQ domain. Residues 839–1935 (LLKSAETEKE…DIGTKGLNEE (1097 aa)) adopt a coiled-coil conformation. Ser1137 and Ser1269 each carry phosphoserine. The residue at position 1282 (Thr1282) is a Phosphothreonine. Position 1308 is a phosphotyrosine (Tyr1308). The residue at position 1309 (Thr1309) is a Phosphothreonine. Phosphoserine is present on Ser1510. Thr1513 carries the post-translational modification Phosphothreonine. The disordered stretch occupies residues 1907-1935 (EERADIAESQVNKLRAKSRDIGTKGLNEE). Over residues 1923–1935 (KSRDIGTKGLNEE) the composition is skewed to basic and acidic residues.

This sequence belongs to the TRAFAC class myosin-kinesin ATPase superfamily. Myosin family. In terms of assembly, muscle myosin is a hexameric protein that consists of 2 heavy chain subunits (MHC), 2 alkali light chain subunits (MLC) and 2 regulatory light chain subunits (MLC-2). Interacts with ECPAS. Interacts (via C-terminus) with LRRC39.

The protein resides in the cytoplasm. The protein localises to the myofibril. Its subcellular location is the sarcomere. Its function is as follows. Myosins are actin-based motor molecules with ATPase activity essential for muscle contraction. Forms regular bipolar thick filaments that, together with actin thin filaments, constitute the fundamental contractile unit of skeletal and cardiac muscle. The chain is Myosin-7 (MYH7) from Bos taurus (Bovine).